The chain runs to 397 residues: MVTLTASYEELTESSAVALAIRLGLIQESSHLTCTEIGDGNLNYVFHIFDHKQEKGLIIKQALPYAKVVGESWPLTLDRARIESAALIKQSEYTPHLVPAVYYSDTALAVTAMEDLSHLEIVRKGLIAGKQYPHLSDHVGEFLGKTLFYTSDFATNPKIKKQFVKQFTNPDLCDITEKLVFTDPFFDSSTNDFEEELREAAEALWADLEVQAKAAELKRIFLTSAETLVHGDLHTGSIFASETETKIIDPEFAFYGPFGFDIGHFIANLFLNALSRENEHDQQHLFDHVVNVWATFKEVFAKAWKEDSIEAFSVSDSFLETTFDRILKEATGFAGCELVRRTIGLAHAADLDAIPSPSKRIQQKKTALTLGKTFIKQYHAVETASDLVALFQQSVKE.

ATP is bound by residues Asn43, Lys60, and 114-116; that span reads EDL. Asp232 is a substrate binding site. Residue 249–251 coordinates ATP; that stretch reads DPE. Arg340 contacts substrate.

It belongs to the methylthioribose kinase family. In terms of assembly, homodimer.

The enzyme catalyses 5-(methylsulfanyl)-D-ribose + ATP = 5-(methylsulfanyl)-alpha-D-ribose 1-phosphate + ADP + H(+). Its pathway is amino-acid biosynthesis; L-methionine biosynthesis via salvage pathway; S-methyl-5-thio-alpha-D-ribose 1-phosphate from S-methyl-5'-thioadenosine (hydrolase route): step 2/2. Catalyzes the phosphorylation of methylthioribose into methylthioribose-1-phosphate. This Bacillus pumilus (strain SAFR-032) protein is Methylthioribose kinase.